The primary structure comprises 412 residues: Putative competence-damage inducible protein (412 aa).

This sequence belongs to the CinA family.

This is Putative competence-damage inducible protein from Caldanaerobacter subterraneus subsp. tengcongensis (strain DSM 15242 / JCM 11007 / NBRC 100824 / MB4) (Thermoanaerobacter tengcongensis).